A 150-amino-acid polypeptide reads, in one-letter code: Large ribosomal subunit protein bL9 (150 aa).

This sequence belongs to the bacterial ribosomal protein bL9 family.

Binds to the 23S rRNA. The chain is Large ribosomal subunit protein bL9 from Saccharopolyspora erythraea (strain ATCC 11635 / DSM 40517 / JCM 4748 / NBRC 13426 / NCIMB 8594 / NRRL 2338).